The sequence spans 298 residues: 4-hydroxy-tetrahydrodipicolinate synthase (298 aa).

Residue threonine 51 participates in pyruvate binding. Residue tyrosine 139 is the Proton donor/acceptor of the active site. Catalysis depends on lysine 167, which acts as the Schiff-base intermediate with substrate. Isoleucine 209 contacts pyruvate.

The protein belongs to the DapA family. In terms of assembly, homotetramer; dimer of dimers.

The protein resides in the cytoplasm. The catalysed reaction is L-aspartate 4-semialdehyde + pyruvate = (2S,4S)-4-hydroxy-2,3,4,5-tetrahydrodipicolinate + H2O + H(+). It participates in amino-acid biosynthesis; L-lysine biosynthesis via DAP pathway; (S)-tetrahydrodipicolinate from L-aspartate: step 3/4. Catalyzes the condensation of (S)-aspartate-beta-semialdehyde [(S)-ASA] and pyruvate to 4-hydroxy-tetrahydrodipicolinate (HTPA). This chain is 4-hydroxy-tetrahydrodipicolinate synthase, found in Haemophilus influenzae (strain ATCC 51907 / DSM 11121 / KW20 / Rd).